Here is a 1199-residue protein sequence, read N- to C-terminus: MSQTFATIDGNEAVARVAYKLNEVIAIYPITPSSAMGEWADAWMAEGRPNLWGTVPSVVQMQSEGGAAGAVHGALQTGSLSTTFTASQGLLLMIPNLYKIGGELTSMVVHVAARSLATHALSIFGDHSDVMAARGTGFAMLCSASVQESHDFALIAHAATLDTRVSFLHFFDGFRTSHEVQKVELLADDDVRSLINEDKIFAHRARALTPDSPLLRGTAQNPDVFFQAREGANPYYNACPAIVQGIMDKFGERTGRYYQIYEYHGASDADRLIIIMGSGCETVHETVDYLNARGEKVGVLKVRLFRPWDVERFVQALPHSVQAIAVLDRTKEPGSAGEPLYQDVVTAIHEGWVNKNNSPVPSPQSPVPKIIGGRYGLSSKEFTPAMVKAVFDNLAQATPKNHFTIGINDDVTHTSLEYDPSFSTEPDNVVRAMFYGLGSDGTVGANKNSIKIIGEGTDNYAQGYFVYDSKKSGSMTVSHLRFGSQPIRSTYLIDQANFIGCHHWGFLERIEVLNAAAHGATILLNSPYNAATVWENLPLKVRLQILDKQLKLYVINANQVARDSGMGGRINTIMQVCFFALAGVLPEVQAIAKIKQAIEKTYGKKGVEVVRMNLQAVDQTLENLHEVKIPIEEKGKWIDEEALLSNQSPFSTSAPKFVRDVLGKIMVWQGDDLPVSTLPPDGTFPTGTAKWEKRNVAQEIPVWDTDICVQCSKCVMVCPHAAIRAKVYQPSELENAPPTFKSVDAKDRDFANQKFTIQVAPEDCTGCAICVNVCPAKNKSEPSLKAINMANQLPLREQERDNWDFFLNLPNPDRRNLKLNQIRQQQLQEPLFEFSGACAGCGETPYVKLLTQLFGDRSVIANATGCSSIYGGNLPTTPWTKNNDGRGPAWSNSLFEDNAEFGFGYRLSLDKQAEFAAELLQQFSTEVGDNLVDSILKAPQKTEADIWEQRQRIELLKQQLDKIPTFDPNLKSKIQNLKSLADYLVKKSVWIIGGDGWAYDIDFGGIDHVIASGRNVNILVMDTEVYSNTGGQSSKATPKAAVAKFAASGKPAQKKDMGLMAMNYGNVYVASVALGAKDDQTLKAFLEAEAFDGPSIIIAYSHCIAHGINMTTGMNQQKALVESGRWLLYRYNPLLQEQGKNPLQLDMRSPTQSVEQSMYQENRFKMLTKSKPEVAKQLLEQAQAEVDARWQMYQYLASR.

4Fe-4S ferredoxin-type domains are found at residues 699–728 (EIPV…AKVY) and 755–784 (FTIQ…EPSL). [4Fe-4S] cluster contacts are provided by Cys708, Cys711, Cys714, Cys718, Cys764, Cys767, Cys770, Cys774, Cys838, Cys841, Cys866, and Cys1103.

The protein belongs to the pyruvate:ferredoxin/flavodoxin oxidoreductase family. [4Fe-4S] cluster serves as cofactor.

The enzyme catalyses oxidized [flavodoxin] + pyruvate + CoA + 2 H(+) = reduced [flavodoxin] + acetyl-CoA + CO2. Its function is as follows. Oxidoreductase required for the transfer of electrons from pyruvate to flavodoxin, which reduces nitrogenase. This Nostoc sp. (strain PCC 7120 / SAG 25.82 / UTEX 2576) protein is Pyruvate-flavodoxin oxidoreductase (nifJ).